A 383-amino-acid polypeptide reads, in one-letter code: Probable protein phosphatase 2C 13 (383 aa).

In terms of domain architecture, PPM-type phosphatase spans 78-349 (RSGSFADIRS…DNMTVIVICF (272 aa)). Mn(2+)-binding residues include Asp121, Gly122, Asp297, and Asp340.

Belongs to the PP2C family. It depends on Mg(2+) as a cofactor. Mn(2+) serves as cofactor.

It carries out the reaction O-phospho-L-seryl-[protein] + H2O = L-seryl-[protein] + phosphate. The enzyme catalyses O-phospho-L-threonyl-[protein] + H2O = L-threonyl-[protein] + phosphate. This chain is Probable protein phosphatase 2C 13, found in Arabidopsis thaliana (Mouse-ear cress).